The sequence spans 559 residues: Protein QNR-71 (559 aa).

A signal peptide spans 1–22 (MSQAHRHLALLLPAEAVLCAAA). At 23–487 (MRFQDVLSNG…NGGSSSGTTK (465 aa)) the chain is on the extracellular side. 10 N-linked (GlcNAc...) asparagine glycosylation sites follow: Asn92, Asn133, Asn145, Asn149, Asn192, Asn199, Asn248, Asn274, Asn307, and Asn311. A PKD domain is found at 239-326 (VSMSQKHDRN…IIPVPCKPVT (88 aa)). Residues 329 to 356 (PSLPTPAVTTDASSNSDPSAPNEMAEDN) are disordered. Polar residues predominate over residues 335–347 (AVTTDASSNSDPS). Asn459 carries an N-linked (GlcNAc...) asparagine glycan. Residues 488–508 (GVFIFLGLLAVFGAIGAFVLY) traverse the membrane as a helical segment. The Cytoplasmic segment spans residues 509 to 559 (KRYKQYKPIERSAGQAENQEGLSAYVSNFKAFFFPKSTERNPLLKSKPGIV).

It belongs to the PMEL/NMB family. As to expression, melanocyte-specific, restricted to the pigmented layer of the retina and the epidermis.

The protein resides in the membrane. Could be involved in melanogenesis. The chain is Protein QNR-71 (QNR-71) from Coturnix japonica (Japanese quail).